The following is a 91-amino-acid chain: LYR motif-containing protein 4 (91 aa).

Residues Arg6 and Lys44 each contribute to the pantetheine 4'-phosphate site. Lys47 is subject to N6-succinyllysine.

It belongs to the complex I LYR family. In terms of assembly, homodimer. Component of the mitochondrial core iron-sulfur cluster (ISC) complex composed of NFS1, LYRM4, NDUFAB1, ISCU, FXN, and FDX2; this complex is a heterohexamer containing two copies of each monomer. Component of the cyteine desulfurase complex composed of NFS1, LYRM4 and NDUFAB1; this complex contributes to the stability and cysteine desulfurase activity of NFS1. Interacts with FXN; this interaction is nickel-dependent. Interacts with the cytoplasmic form of NFS1; the complex increases the stability of NFS1. Forms a complex with the cytoplasmic form of NFS1; this complex increases the stability and cysteine desulfurase activity of NFS1. Interacts with NFS1.

The protein localises to the mitochondrion. It localises to the nucleus. It participates in cofactor biosynthesis; iron-sulfur cluster biosynthesis. Its function is as follows. Stabilizing factor, of the core iron-sulfur cluster (ISC) assembly complex, that regulates, in association with NDUFAB1, the stability and the cysteine desulfurase activity of NFS1 and participates in the [2Fe-2S] clusters assembly on the scaffolding protein ISCU. The core iron-sulfur cluster (ISC) assembly complex is involved in the de novo synthesis of a [2Fe-2S] cluster, the first step of the mitochondrial iron-sulfur protein biogenesis. This process is initiated by the cysteine desulfurase complex (NFS1:LYRM4:NDUFAB1) that produces persulfide which is delivered on the scaffold protein ISCU in a FXN-dependent manner. Then this complex is stabilized by FDX2 which provides reducing equivalents to accomplish the [2Fe-2S] cluster assembly. Finally, the [2Fe-2S] cluster is transferred from ISCU to chaperone proteins, including HSCB, HSPA9 and GLRX5. May also participates in the iron-sulfur protein biogenesis in the cytoplasm through its interaction with the cytoplasmic form of NFS1. The polypeptide is LYR motif-containing protein 4 (Bos taurus (Bovine)).